Reading from the N-terminus, the 195-residue chain is Holliday junction branch migration complex subunit RuvA (195 aa).

Residues 1-61 (MYEYLDGVVV…ENDQTLYGFK (61 aa)) are domain I. Positions 62-139 (KAEDKELFLN…AVENEVGTLF (78 aa)) are domain II. Residues 139–143 (FDLST) form a flexible linker region. The tract at residues 144–195 (TSNQALDEALEALIALGYSEKEVKKLTKKLSEQTDRTTDQYISSGLKLLMKG) is domain III.

The protein belongs to the RuvA family. As to quaternary structure, homotetramer. Forms an RuvA(8)-RuvB(12)-Holliday junction (HJ) complex. HJ DNA is sandwiched between 2 RuvA tetramers; dsDNA enters through RuvA and exits via RuvB. An RuvB hexamer assembles on each DNA strand where it exits the tetramer. Each RuvB hexamer is contacted by two RuvA subunits (via domain III) on 2 adjacent RuvB subunits; this complex drives branch migration. In the full resolvosome a probable DNA-RuvA(4)-RuvB(12)-RuvC(2) complex forms which resolves the HJ.

The protein resides in the cytoplasm. In terms of biological role, the RuvA-RuvB-RuvC complex processes Holliday junction (HJ) DNA during genetic recombination and DNA repair, while the RuvA-RuvB complex plays an important role in the rescue of blocked DNA replication forks via replication fork reversal (RFR). RuvA specifically binds to HJ cruciform DNA, conferring on it an open structure. The RuvB hexamer acts as an ATP-dependent pump, pulling dsDNA into and through the RuvAB complex. HJ branch migration allows RuvC to scan DNA until it finds its consensus sequence, where it cleaves and resolves the cruciform DNA. In Pediococcus pentosaceus (strain ATCC 25745 / CCUG 21536 / LMG 10740 / 183-1w), this protein is Holliday junction branch migration complex subunit RuvA.